The primary structure comprises 204 residues: Translation initiation factor 2 subunit beta (204 aa).

Residues 146-204 (NLEEGQVLDVEIQSLSKRGDGVVKMGRYIMYVSNAKPGQSVKIKISRISGSIVFTERAE) enclose the TRAM domain.

The protein belongs to the eIF-2-beta/eIF-5 family. In terms of assembly, heterotrimer composed of an alpha, a beta and a gamma chain.

In terms of biological role, eIF-2 functions in the early steps of protein synthesis by forming a ternary complex with GTP and initiator tRNA. This is Translation initiation factor 2 subunit beta from Methanoregula boonei (strain DSM 21154 / JCM 14090 / 6A8).